We begin with the raw amino-acid sequence, 328 residues long: DNA-directed RNA polymerase subunit alpha (328 aa).

An alpha N-terminal domain (alpha-NTD) region spans residues 1–234 (MQGSVTEFLK…EQLDAFVDLR (234 aa)). Residues 248–328 (FXPILLRPVD…NWPPASIAED (81 aa)) are alpha C-terminal domain (alpha-CTD).

It belongs to the RNA polymerase alpha chain family. In terms of assembly, homodimer. The RNAP catalytic core consists of 2 alpha, 1 beta, 1 beta' and 1 omega subunit. When a sigma factor is associated with the core the holoenzyme is formed, which can initiate transcription.

It carries out the reaction RNA(n) + a ribonucleoside 5'-triphosphate = RNA(n+1) + diphosphate. Functionally, DNA-dependent RNA polymerase catalyzes the transcription of DNA into RNA using the four ribonucleoside triphosphates as substrates. This is DNA-directed RNA polymerase subunit alpha from Haemophilus influenzae (strain ATCC 51907 / DSM 11121 / KW20 / Rd).